A 483-amino-acid chain; its full sequence is Altronate oxidoreductase (483 aa).

18 to 29 (IIQFGEGNFLRA) contributes to the NAD(+) binding site.

This sequence belongs to the mannitol dehydrogenase family. UxaB subfamily.

The enzyme catalyses D-altronate + NAD(+) = keto-D-tagaturonate + NADH + H(+). It functions in the pathway carbohydrate metabolism; pentose and glucuronate interconversion. This chain is Altronate oxidoreductase, found in Yersinia enterocolitica serotype O:8 / biotype 1B (strain NCTC 13174 / 8081).